The sequence spans 503 residues: CDK5 regulatory subunit-associated protein 3 (503 aa).

Short sequence motifs (shuffled ATG8-binding motif) lie at residues 266–269 (IDWG), 288–291 (IDWG), and 306–309 (IDWG). The required for interaction with UFL1 and mediates interaction with CHEK1 stretch occupies residues 268–503 (WGDFGVEAVS…RPVNLMGTSL (236 aa)). Residues 352-367 (DELMELEIFLSQRAVE) are RPL10a-binding domain (RBD). Residue lysine 447 forms a Glycyl lysine isopeptide (Lys-Gly) (interchain with G-Cter in SUMO2) linkage.

Belongs to the CDK5RAP3 family. Substrate adapter component of the UFM1 ribosome E3 ligase (UREL) complex, composed of UFL1, DDRGK1 and CDK5RAP3. Interaction with UFL1 anchors CDK5RAP3 in the cytoplasm, preventing its translocation to the nucleus which allows expression of the CCND1 cyclin and progression of cells through the G1/S transition. Interacts with ATG8 family proteins MAP1LC3A, MAP1LC3B, GABARAP, GABARAPL1 and GABARAPL2. Interacts with CDK5R1; competes with CDK5RAP1 and CDK5RAP2. Interacts with RELA. Interacts with CHEK1; may negatively regulate CHEK1 and thereby stimulate entry into mitosis. Interacts with CDKN2A/ARF and MDM2; forms a ternary complex involved in regulation of p53/TP53. Interacts with MAPK14. Interacts with CCNB1. Interacts with TUBG1; may regulate CDK5RAP3 in mitotic G2/M transition checkpoint. May be phosphorylated by CDK5. In terms of processing, ubiquitinated. Probably triggers proteasomal degradation and is negatively regulated by UFL1. Post-translationally, may be ufmylated. Cleaved by caspases early during apoptosis, the resulting peptides may play a role in rupture of the nuclear envelope. As to expression, widely expressed with higher expression in secretory tissues.

The protein localises to the endoplasmic reticulum membrane. Its subcellular location is the cytoplasm. The protein resides in the nucleus. It is found in the cytoskeleton. It localises to the microtubule organizing center. The protein localises to the centrosome. Its function is as follows. Substrate adapter of E3 ligase complexes mediating ufmylation, the covalent attachment of the ubiquitin-like modifier UFM1 to substrate proteins, and which is involved in various processes, such as ribosome recycling and reticulophagy (also called ER-phagy). As part of the UREL complex, plays a key role in ribosome recycling by promoting mono-ufmylation of RPL26/uL24 subunit of the 60S ribosome. Ufmylation of RPL26/uL24 occurs on free 60S ribosomes following ribosome dissociation: it weakens the junction between post-termination 60S subunits and SEC61 translocons, promoting release and recycling of the large ribosomal subunit from the endoplasmic reticulum membrane. Ufmylation of RPL26/uL24 and subsequent 60S ribosome recycling either take place after normal termination of translation or after ribosome stalling during cotranslational translocation at the endoplasmic reticulum. Within the UREL complex, CDK5RAP3 acts as a substrate adapter that constrains UFL1 ligase activity to mono-ufmylate RPL26/uL24 at 'Lys-134'. The UREL complex is also involved in reticulophagy in response to endoplasmic reticulum stress by promoting ufmylation of proteins such as CYB5R3, thereby promoting lysosomal degradation of ufmylated proteins. Also acts as a regulator of transcription: negatively regulates NF-kappa-B-mediated gene transcription through the control of RELA phosphorylation. Also regulates mitotic G2/M transition checkpoint and mitotic G2 DNA damage checkpoint. Through its interaction with CDKN2A/ARF and MDM2 may induce MDM2-dependent p53/TP53 ubiquitination, stabilization and activation in the nucleus, thereby promoting G1 cell cycle arrest and inhibition of cell proliferation. May also play a role in the rupture of the nuclear envelope during apoptosis. May regulate MAPK14 activity by regulating its dephosphorylation by PPM1D/WIP1. Required for liver development. The polypeptide is CDK5 regulatory subunit-associated protein 3 (Mus musculus (Mouse)).